Reading from the N-terminus, the 419-residue chain is Enolase (419 aa).

Q160 contacts (2R)-2-phosphoglycerate. Residue E204 is the Proton donor of the active site. Mg(2+) is bound by residues D240, E283, and D309. K334, R363, S364, and K385 together coordinate (2R)-2-phosphoglycerate. K334 (proton acceptor) is an active-site residue.

It belongs to the enolase family. Requires Mg(2+) as cofactor.

The protein localises to the cytoplasm. The protein resides in the secreted. Its subcellular location is the cell surface. The enzyme catalyses (2R)-2-phosphoglycerate = phosphoenolpyruvate + H2O. The protein operates within carbohydrate degradation; glycolysis; pyruvate from D-glyceraldehyde 3-phosphate: step 4/5. In terms of biological role, catalyzes the reversible conversion of 2-phosphoglycerate (2-PG) into phosphoenolpyruvate (PEP). It is essential for the degradation of carbohydrates via glycolysis. The polypeptide is Enolase (Pyrobaculum aerophilum (strain ATCC 51768 / DSM 7523 / JCM 9630 / CIP 104966 / NBRC 100827 / IM2)).